A 483-amino-acid chain; its full sequence is Glutamyl-tRNA(Gln) amidotransferase subunit A (483 aa).

Catalysis depends on charge relay system residues K76 and S151. S175 (acyl-ester intermediate) is an active-site residue.

This sequence belongs to the amidase family. GatA subfamily. As to quaternary structure, heterotrimer of A, B and C subunits.

It catalyses the reaction L-glutamyl-tRNA(Gln) + L-glutamine + ATP + H2O = L-glutaminyl-tRNA(Gln) + L-glutamate + ADP + phosphate + H(+). Allows the formation of correctly charged Gln-tRNA(Gln) through the transamidation of misacylated Glu-tRNA(Gln) in organisms which lack glutaminyl-tRNA synthetase. The reaction takes place in the presence of glutamine and ATP through an activated gamma-phospho-Glu-tRNA(Gln). The protein is Glutamyl-tRNA(Gln) amidotransferase subunit A of Pseudomonas putida (strain GB-1).